Here is a 566-residue protein sequence, read N- to C-terminus: Proline--tRNA ligase 1 (566 aa).

Belongs to the class-II aminoacyl-tRNA synthetase family. ProS type 1 subfamily. Homodimer.

It localises to the cytoplasm. It carries out the reaction tRNA(Pro) + L-proline + ATP = L-prolyl-tRNA(Pro) + AMP + diphosphate. Its function is as follows. Catalyzes the attachment of proline to tRNA(Pro) in a two-step reaction: proline is first activated by ATP to form Pro-AMP and then transferred to the acceptor end of tRNA(Pro). As ProRS can inadvertently accommodate and process non-cognate amino acids such as alanine and cysteine, to avoid such errors it has two additional distinct editing activities against alanine. One activity is designated as 'pretransfer' editing and involves the tRNA(Pro)-independent hydrolysis of activated Ala-AMP. The other activity is designated 'posttransfer' editing and involves deacylation of mischarged Ala-tRNA(Pro). The misacylated Cys-tRNA(Pro) is not edited by ProRS. This chain is Proline--tRNA ligase 1, found in Bacillus thuringiensis subsp. konkukian (strain 97-27).